The sequence spans 140 residues: Relaxin-3 (140 aa).

The N-terminal stretch at 1-26 is a signal peptide; that stretch reads MAKRPLLLLLLAVWVLAGELWLRTEA. Disulfide bonds link Cys36–Cys127, Cys48–Cys140, and Cys126–Cys131. Residues 56–116 constitute a propeptide, connecting peptide; sequence SDMLAHEALG…RTPGALRGSR (61 aa).

This sequence belongs to the insulin family. Heterodimer of a B chain and an A chain linked by two disulfide bonds.

The protein resides in the secreted. May play a role in neuropeptide signaling processes. Ligand for LGR7, RXFP3 and RXFP4. The chain is Relaxin-3 (RLN3) from Sus scrofa (Pig).